The sequence spans 46 residues: Diuretic hormone (46 aa).

The residue at position 46 (isoleucine 46) is an Isoleucine amide.

Belongs to the sauvagine/corticotropin-releasing factor/urotensin I family.

It localises to the secreted. Its function is as follows. Regulation of fluid secretion. Stimulates primary urine secretion by Malpighian tubules and causes a dose-dependent stimulation of cAMP levels in the tubules. The protein is Diuretic hormone of Locusta migratoria (Migratory locust).